A 101-amino-acid polypeptide reads, in one-letter code: Urease subunit beta (101 aa).

It belongs to the urease beta subunit family. In terms of assembly, heterotrimer of UreA (gamma), UreB (beta) and UreC (alpha) subunits. Three heterotrimers associate to form the active enzyme.

It localises to the cytoplasm. The catalysed reaction is urea + 2 H2O + H(+) = hydrogencarbonate + 2 NH4(+). The protein operates within nitrogen metabolism; urea degradation; CO(2) and NH(3) from urea (urease route): step 1/1. This chain is Urease subunit beta, found in Burkholderia vietnamiensis (strain G4 / LMG 22486) (Burkholderia cepacia (strain R1808)).